The following is a 1978-amino-acid chain: Sodium channel protein type 8 subunit alpha (1978 aa).

2 disordered regions span residues 1–20 and 28–62; these read MAAR…FTPE and RIAE…LEAG. Residues 1-132 lie on the Cytoplasmic side of the membrane; it reads MAARLLAPPG…RIAIKILIHS (132 aa). Residues 28–61 are compositionally biased toward basic and acidic residues; sequence RIAESKLKKPPKADGSHREDDEDSKPKPNSDLEA. An I repeat occupies 114-442; the sequence is ILSPFNLIRR…KAMLEQLKKQ (329 aa). Residues 133–151 traverse the membrane as a helical segment; that stretch reads VFSMIIMCTILTNCVFMTF. Residues 152 to 158 lie on the Extracellular side of the membrane; sequence SNPPEWS. The helical transmembrane segment at 159-179 threads the bilayer; the sequence is KNVEYTFTGIYTFESLVKIIA. Residues 180-193 lie on the Cytoplasmic side of the membrane; it reads RGFCIDGFTFLRDP. The chain crosses the membrane as a helical span at residues 194–211; sequence WNWLDFSVIMMAYVTEFV. Topologically, residues 212 to 217 are extracellular; that stretch reads DLGNVS. Asn-215 is a glycosylation site (N-linked (GlcNAc...) asparagine). Residues 218–234 traverse the membrane as a helical segment; that stretch reads ALRTFRVLRALKTISVI. Residues 235–253 are Cytoplasmic-facing; the sequence is PGLKTIVGALIQSVKKLSD. The helical transmembrane segment at 254–273 threads the bilayer; the sequence is VMILTVFCLSVFALIGLQLF. At 274 to 355 the chain is on the extracellular side; it reads MGNLRNKCVV…PNYGYTSFDT (82 aa). A disulfide bridge connects residues Cys-281 and Cys-333. 4 N-linked (GlcNAc...) asparagine glycosylation sites follow: Asn-289, Asn-295, Asn-308, and Asn-326. Residues 356-380 constitute an intramembrane region (pore-forming); sequence FSWAFLALFRLMTQDYWENLYQLTL. Glu-373 is a binding site for Na(+). Topologically, residues 381–387 are extracellular; the sequence is RAAGKTY. A helical transmembrane segment spans residues 388–408; it reads MIFFVLVIFVGSFYLVNLILA. At 409-751 the chain is on the cytoplasmic side; it reads VVAMAYEEQN…EIVNLIVMDP (343 aa). 2 disordered regions span residues 446–530 and 576–597; these read AQAA…KAFR and DPGS…SEGR. The span at 473–486 shows a compositional bias: low complexity; that stretch reads SPRSSSELSKLSSK. Over residues 489-500 the composition is skewed to basic residues; that stretch reads KERRNRRKKRKQ. 2 stretches are compositionally biased toward basic and acidic residues: residues 501–530 and 586–597; these read KELS…KAFR and DEHSTVEESEGR. Phosphoserine occurs at positions 518 and 520. The II repeat unit spans residues 733-1005; the sequence is CHPYWIKLKE…QISVIRIKKG (273 aa). A helical membrane pass occupies residues 752–770; the sequence is FVDLAITICIVLNTLFMAM. The Extracellular portion of the chain corresponds to 771-781; that stretch reads EHHPMTPQFEH. A helical membrane pass occupies residues 782–801; sequence VLAVGNLVFTGIFTAEMFLK. The Cytoplasmic segment spans residues 802 to 815; it reads LIAMDPYYYFQEGW. Residues 816–835 form a helical membrane-spanning segment; that stretch reads NIFDGFIVSLSLMELSLADV. Over 836-837 the chain is Extracellular; that stretch reads EG. Residues 838–855 form a helical membrane-spanning segment; it reads LSVLRSFRLLRVFKLAKS. The Cytoplasmic portion of the chain corresponds to 856-871; the sequence is WPTLNMLIKIIGNSVG. Residues 872 to 890 traverse the membrane as a helical segment; it reads ALGNLTLVLAIIVFIFAVV. At 891 to 919 the chain is on the extracellular side; that stretch reads GMQLFGKSYKECVCKINQECKLPRWHMND. A disulfide bridge connects residues Cys-904 and Cys-910. Positions 920-940 form an intramembrane region, pore-forming; it reads FFHSFLIVFRVLCGEWIETMW. The Na(+) site is built by Glu-934 and Glu-937. Residues 941 to 953 are Extracellular-facing; the sequence is DCMEVAGQAMCLI. A disulfide bridge links Cys-942 with Cys-951. The helical transmembrane segment at 954–974 threads the bilayer; the sequence is VFMMVMVIGNLVVLNLFLALL. Over 975–1197 the chain is Cytoplasmic; sequence LSSFSADNLA…TCFLIVEHNW (223 aa). The tract at residues 1105 to 1146 is disordered; it reads NLNTEDVSSESDPEGSKDKLDDTSSSEGSTIDIKPEVEEVPV. The III repeat unit spans residues 1178 to 1493; the sequence is LGKSWWILRK…KKYYNAMKKL (316 aa). A helical membrane pass occupies residues 1198–1215; the sequence is FETFIIFMILLSSGALAF. Residues 1216-1228 are Extracellular-facing; the sequence is EDIYIEQRKTIRT. Residues 1229-1247 traverse the membrane as a helical segment; sequence ILEYADKVFTYIFILEMLL. The Cytoplasmic segment spans residues 1248–1261; it reads KWTAYGFVKFFTNA. A helical membrane pass occupies residues 1262 to 1280; it reads WCWLDFLIVAVSLVSLIAN. Over 1281–1288 the chain is Extracellular; the sequence is ALGYSELG. The chain crosses the membrane as a helical span at residues 1289–1307; it reads AIKSLRTLRALRPLRALSR. At 1308-1324 the chain is on the cytoplasmic side; the sequence is FEGMRVVVNALVGAIPS. Residues 1325 to 1344 traverse the membrane as a helical segment; that stretch reads IMNVLLVCLIFWLIFSIMGV. The Extracellular portion of the chain corresponds to 1345-1397; the sequence is NLFAGKYHYCFNETSEIRFEIDIVNNKTDCEKLMEGNSTEIRWKNVKINFDNV. A disulfide bridge links Cys-1354 with Cys-1374. N-linked (GlcNAc...) asparagine glycosylation is found at Asn-1356, Asn-1370, and Asn-1381. Residues 1398–1419 constitute an intramembrane region (pore-forming); it reads GAGYLALLQVATFKGWMDIMYA. At 1420–1436 the chain is on the extracellular side; the sequence is AVDSRKPDEQPDYEGNI. The chain crosses the membrane as a helical span at residues 1437 to 1458; sequence YMYIYFVIFIIFGSFFTLNLFI. Residues 1459-1521 lie on the Cytoplasmic side of the membrane; that stretch reads GVIIDNFNQQ…IVFDFVTQQA (63 aa). A Phosphoserine; by PKC modification is found at Ser-1495. An IV repeat occupies 1502-1799; sequence IPRPLNKIQG…WEKFDPDATQ (298 aa). The helical transmembrane segment at 1522-1539 threads the bilayer; the sequence is FDIVIMMLICLNMVTMMV. Residues 1540–1550 are Extracellular-facing; the sequence is ETDTQSKQMEN. The helical transmembrane segment at 1551-1569 threads the bilayer; that stretch reads ILYWINLVFVIFFTCECVL. Over 1570 to 1581 the chain is Cytoplasmic; that stretch reads KMFALRHYYFTI. The helical transmembrane segment at 1582 to 1599 threads the bilayer; sequence GWNIFDFVVVILSIVGMF. Topologically, residues 1600-1612 are extracellular; the sequence is LADIIEKYFVSPT. A helical transmembrane segment spans residues 1613-1629; the sequence is LFRVIRLARIGRILRLI. Topologically, residues 1630–1648 are cytoplasmic; that stretch reads KGAKGIRTLLFALMMSLPA. Residues 1649 to 1666 form a helical membrane-spanning segment; it reads LFNIGLLLFLVMFIFSIF. Topologically, residues 1667–1688 are extracellular; that stretch reads GMSNFAYVKHEAGIDDMFNFET. An intramembrane region (pore-forming) is located at residues 1689 to 1711; it reads FGNSMICLFQITTSAGWDGLLLP. The Extracellular portion of the chain corresponds to 1712 to 1740; the sequence is ILNRPPDCSLDKEHPGSGFKGDCGNPSVG. Cys-1719 and Cys-1734 are disulfide-bonded. Residues 1741–1763 form a helical membrane-spanning segment; the sequence is IFFFVSYIIISFLIVVNMYIAII. The Cytoplasmic segment spans residues 1764 to 1978; it reads LENFSVATEE…RQKEVRESKC (215 aa). Positions 1893 to 1922 constitute an IQ domain; the sequence is EEVSAVVLQRAYRGHLARRGFICRKMASNK. Residues 1923–1978 are disordered; it reads LENGGTHRDKKESTPSTASLPSYDSVTKPDKEKQQRAEEGRRERAKRQKEVRESKC. The span at 1936-1947 shows a compositional bias: polar residues; it reads TPSTASLPSYDS. Positions 1949–1978 are enriched in basic and acidic residues; the sequence is TKPDKEKQQRAEEGRRERAKRQKEVRESKC.

It belongs to the sodium channel (TC 1.A.1.10) family. Nav1.6/SCN8A subfamily. As to quaternary structure, the voltage-sensitive sodium channel consists of an ion-conducting pore-forming alpha subunit regulated by one or more beta-1 (SCN1B), beta-2 (SCN2B), beta-3 (SCN3B) and/or beta-4 (SCN4B) subunits. Beta-1 (SCN1B) and beta-3 (SCN3B) are non-covalently associated with alpha, while beta-2 (SCN2B) and beta-4 (SCN4B) are covalently linked by disulfide bonds. Interacts with NEDD4 and NEDD4L. Interacts with FGF13. Interacts with FGF14, GBG3, GBB2 and SCN1B. Interacts with TMEM233. Interacts with the conotoxin GVIIJ. Interacts with CALM1; the interaction modulates the inactivation rate of SCN8A. Post-translationally, may be ubiquitinated by NEDD4L; which would promote its endocytosis. In terms of processing, phosphorylation at Ser-1495 by PKC in a highly conserved cytoplasmic loop slows inactivation of the sodium channel and reduces peak sodium currents. As to expression, isoform 1 is highly expressed in brain, moderately in spinal cord, and at low levels in dorsal root ganglia, nodose ganglia and superior cervical ganglia. Not detected in sciatic nerve and non-neuronal tissues. Isoform 2 is hardly detectable, if at all, in brain, expressed at low levels in spinal cord and at highest levels in dorsal root ganglia.

It is found in the cell membrane. The protein resides in the cell projection. Its subcellular location is the axon. The enzyme catalyses Na(+)(in) = Na(+)(out). Functionally, pore-forming subunit of a voltage-gated sodium channel complex assuming opened or closed conformations in response to the voltage difference across membranes and through which sodium ions selectively pass along their electrochemical gradient. Contributes to neuronal excitability by regulating action potential threshold and propagation. The polypeptide is Sodium channel protein type 8 subunit alpha (Rattus norvegicus (Rat)).